The primary structure comprises 355 residues: Phosphate acyltransferase (355 aa).

Belongs to the PlsX family. As to quaternary structure, homodimer. Probably interacts with PlsY.

It localises to the cytoplasm. The enzyme catalyses a fatty acyl-[ACP] + phosphate = an acyl phosphate + holo-[ACP]. It participates in lipid metabolism; phospholipid metabolism. In terms of biological role, catalyzes the reversible formation of acyl-phosphate (acyl-PO(4)) from acyl-[acyl-carrier-protein] (acyl-ACP). This enzyme utilizes acyl-ACP as fatty acyl donor, but not acyl-CoA. The sequence is that of Phosphate acyltransferase from Azorhizobium caulinodans (strain ATCC 43989 / DSM 5975 / JCM 20966 / LMG 6465 / NBRC 14845 / NCIMB 13405 / ORS 571).